We begin with the raw amino-acid sequence, 488 residues long: Germacrene A acid 8-beta-hydroxylase (488 aa).

The helical; Signal-anchor for type II membrane protein transmembrane segment at 2-22 (ELFTIFSIVVSSLILFTFWSL) threads the bilayer. The N-linked (GlcNAc...) asparagine glycan is linked to Asn407. Cys429 contacts heme.

It belongs to the cytochrome P450 family. It depends on heme as a cofactor. As to expression, expressed in leaf primordia.

It localises to the membrane. It catalyses the reaction germacra-1(10),4,11(13)-trien-12-oate + reduced [NADPH--hemoprotein reductase] + O2 = 8beta-hydroxygermacra-1(10),4,11(13)-trien-12-oate + oxidized [NADPH--hemoprotein reductase] + H2O + H(+). It participates in secondary metabolite biosynthesis; terpenoid biosynthesis. Functionally, involved in the biosynthesis of germacrene-derived sesquiterpene lactones. Hydroxylates germacrene A acid to 8-beta-hydroxy-germacrene A acid. Unlike 6-alpha-hydroxy-germacrene A acid, this compound cannot undergo spontaneous lactonization. The protein is Germacrene A acid 8-beta-hydroxylase of Helianthus annuus (Common sunflower).